A 525-amino-acid chain; its full sequence is GMP synthase [glutamine-hydrolyzing] (525 aa).

One can recognise a Glutamine amidotransferase type-1 domain in the interval 9 to 207; the sequence is RILILDFGSQ…VQDICGCEAL (199 aa). Residue Cys86 is the Nucleophile of the active site. Catalysis depends on residues His181 and Glu183. Residues 208–400 enclose the GMPS ATP-PPase domain; the sequence is WTPSNIVEDA…LGLPYDMVYR (193 aa). 235–241 provides a ligand contact to ATP; that stretch reads SGGVDSS.

Homodimer.

The catalysed reaction is XMP + L-glutamine + ATP + H2O = GMP + L-glutamate + AMP + diphosphate + 2 H(+). It participates in purine metabolism; GMP biosynthesis; GMP from XMP (L-Gln route): step 1/1. Its function is as follows. Catalyzes the synthesis of GMP from XMP. This chain is GMP synthase [glutamine-hydrolyzing], found in Pseudomonas putida (strain W619).